The following is an 80-amino-acid chain: Trefoil factor 3 (80 aa).

A signal peptide spans 1–21 (MAARALCMLGLVLALLSSSSA). The 44-residue stretch at 30–73 (NQCAVPAKDRVDCGYPHVTPKECNNRGCCFDSRIPGVPWCFKPL) folds into the P-type domain. 3 disulfide bridges follow: Cys32/Cys58, Cys42/Cys57, and Cys52/Cys69.

Monomer. Homodimer; disulfide-linked. Expressed in goblet cells of the intestines and colon (at protein level). Expressed by goblet cells of small and large intestinal epithelia and also by the uterus. Also expressed in the hypothalamus where it is detected in paraventricular, periventricular and supraoptic nuclei (at protein level).

The protein localises to the secreted. It is found in the extracellular space. The protein resides in the extracellular matrix. Its subcellular location is the cytoplasm. Functionally, involved in the maintenance and repair of the intestinal mucosa. Promotes the mobility of epithelial cells in healing processes (motogen). The sequence is that of Trefoil factor 3 (TFF3) from Homo sapiens (Human).